Consider the following 427-residue polypeptide: Adenylosuccinate synthetase (427 aa).

GTP contacts are provided by residues 12-18 and 40-42; these read GDEGKGK and GHT. D13 (proton acceptor) is an active-site residue. Mg(2+)-binding residues include D13 and G40. IMP contacts are provided by residues 13 to 16, 38 to 41, T126, R140, Q221, T236, and R299; these read DEGK and NAGH. The active-site Proton donor is the H41. Position 295-301 (295-301) interacts with substrate; that stretch reads STTKRPR. Residues R301, 327–329, and 409–411 contribute to the GTP site; these read KLD and SVG.

This sequence belongs to the adenylosuccinate synthetase family. Homodimer. Requires Mg(2+) as cofactor.

It is found in the cytoplasm. It catalyses the reaction IMP + L-aspartate + GTP = N(6)-(1,2-dicarboxyethyl)-AMP + GDP + phosphate + 2 H(+). It functions in the pathway purine metabolism; AMP biosynthesis via de novo pathway; AMP from IMP: step 1/2. In terms of biological role, plays an important role in the de novo pathway of purine nucleotide biosynthesis. Catalyzes the first committed step in the biosynthesis of AMP from IMP. The sequence is that of Adenylosuccinate synthetase from Borrelia recurrentis (strain A1).